We begin with the raw amino-acid sequence, 105 residues long: Integration host factor (105 aa).

The short motif at 64-71 is the H2TH motif, binds DNA element; that stretch reads LPKVGKVK. Positions 82-94 are lid, binds DNA; that stretch reads APTRRLRGLGDRQ.

Belongs to the actinobacterial IHF (aIHF) family. As to quaternary structure, binds DNA as a monomer. (Microbial infection) Forms a complex with L5 Int and attP DNA. The complex binds attB to form products.

It localises to the cytoplasm. The protein resides in the nucleoid. Its function is as follows. A nucleoid-associated protein (NAP) that binds DNA without any sequence specificity. Compacts DNA. Binds along the whole chromosome in a dynamic manner, has equal affinity for the oriC site, attB and a randon 62% GC-rich sequence. Plays a role in transcription regulation. Functionally, (Microbial infection) Stimulates temperate Mycobacterium phage L5 Int-mediated recombination in vitro using supercoiled attP (phage attachment site) DNA, linear attB DNA (bacterial attachment site) and L5 integrase (L5 Int or Int-L5, AC P22884). mIHF acts on L5 Int to stimulate formation of a specific intasome complex. mIHF probably stabilizes a sharp bend in the DNA during phage integration. The chain is Integration host factor from Mycolicibacterium smegmatis (strain ATCC 700084 / mc(2)155) (Mycobacterium smegmatis).